The following is a 252-amino-acid chain: 14-3-3 protein homolog 1 (252 aa).

Belongs to the 14-3-3 family.

In Schistosoma mansoni (Blood fluke), this protein is 14-3-3 protein homolog 1.